The sequence spans 140 residues: MDRNINLPEEELKYIKECCEVLYLPQPTRMDIIGVMNDSDISWNENLIILMSEDGKIYVYDDEALYKVADTMEEFSEIGLINLGNEVYHCREDIKPLPEEDRDKDEYIMKIREKARQLIDNSQKDFEAILDSLENKHVSI.

This is an uncharacterized protein from Fowlpox virus (strain NVSL) (FPV).